The chain runs to 333 residues: Sodium/bile acid cotransporter 7 (333 aa).

At 1-10 (MGLLERLRKE) the chain is on the cytoplasmic side. A helical transmembrane segment spans residues 11-31 (WFIAGIALVIAAARLEPAVGV). At 32 to 37 (KGGPLK) the chain is on the extracellular side. A helical transmembrane segment spans residues 38-58 (PEITITYIAVSAIFFNSGLSL). The Cytoplasmic portion of the chain corresponds to 59–71 (KTEELTSALMHVK). A helical membrane pass occupies residues 72–92 (LHLFVQIFTLVFFPTAIWLFL). Over 93 to 103 (QLLSITPINEW) the chain is Extracellular. Residues 104–124 (LLKGLQTVGCMPPPVSSAVIL) traverse the membrane as a helical segment. Residues 125–126 (TK) lie on the Cytoplasmic side of the membrane. Residues 127-147 (AVGGNEAAAIFNSAFGSFLLG) traverse the membrane as a helical segment. Topologically, residues 148–151 (SSSS) are extracellular. Residues 152–172 (VPFTSIFSQLFMTVVVPLIIG) traverse the membrane as a helical segment. Residues 173 to 189 (QIVRRYIKDWLERRKPP) lie on the Cytoplasmic side of the membrane. The chain crosses the membrane as a helical span at residues 190 to 210 (FGTISSCVLLMIIYTTFCDTF). The Extracellular portion of the chain corresponds to 211–222 (ANPNIDLDKFSL). A helical membrane pass occupies residues 223–243 (IIIVFIIFSVQMSFMFLTFLF). Residues 244-258 (STRSNSGFTPADTVA) lie on the Cytoplasmic side of the membrane. A helical membrane pass occupies residues 259–279 (IIFCSTHKSLTLGIPMLKIVF). At 280–286 (AGYEHLS) the chain is on the extracellular side. A helical membrane pass occupies residues 287-307 (LISVPLLIYHPAQILLGSLLV). At 308–333 (PTIKSWMVSRQKALKLTRQPKVPVKV) the chain is on the cytoplasmic side.

Belongs to the bile acid:sodium symporter (BASS) (TC 2.A.28) family.

The protein resides in the cell membrane. It is found in the endoplasmic reticulum membrane. It localises to the golgi apparatus membrane. Its function is as follows. Involved in teeth and skeletal development. Has an essential role in the biosynthesis and trafficking of glycosaminoglycans and glycoproteins to produce a proper functioning extracellular matrix. Required for extracellular matrix mineralization. Also involved in the regulation of cellular calcium homeostasis. Does not show transport activity towards bile acids or steroid sulfates. The protein is Sodium/bile acid cotransporter 7 (SLC10A7) of Gallus gallus (Chicken).